The following is a 174-amino-acid chain: 2-C-methyl-D-erythritol 2,4-cyclodiphosphate synthase (174 aa).

A divalent metal cation contacts are provided by Asp-13, His-15, and His-61. Asp-13–His-15 is a 4-CDP-2-C-methyl-D-erythritol 2-phosphate binding site. 4-CDP-2-C-methyl-D-erythritol 2-phosphate is bound by residues Asp-75–Gly-77, Thr-149–Asp-152, Phe-156, and Arg-159.

It belongs to the IspF family. In terms of assembly, homotrimer. The cofactor is a divalent metal cation.

It carries out the reaction 4-CDP-2-C-methyl-D-erythritol 2-phosphate = 2-C-methyl-D-erythritol 2,4-cyclic diphosphate + CMP. The protein operates within isoprenoid biosynthesis; isopentenyl diphosphate biosynthesis via DXP pathway; isopentenyl diphosphate from 1-deoxy-D-xylulose 5-phosphate: step 4/6. Involved in the biosynthesis of isopentenyl diphosphate (IPP) and dimethylallyl diphosphate (DMAPP), two major building blocks of isoprenoid compounds. Catalyzes the conversion of 4-diphosphocytidyl-2-C-methyl-D-erythritol 2-phosphate (CDP-ME2P) to 2-C-methyl-D-erythritol 2,4-cyclodiphosphate (ME-CPP) with a corresponding release of cytidine 5-monophosphate (CMP). This is 2-C-methyl-D-erythritol 2,4-cyclodiphosphate synthase from Bifidobacterium longum subsp. infantis (strain ATCC 15697 / DSM 20088 / JCM 1222 / NCTC 11817 / S12).